We begin with the raw amino-acid sequence, 254 residues long: Vitamin B12 import ATP-binding protein BtuD (254 aa).

Positions 3–239 (INYISVGNRL…ENLQQVFETP (237 aa)) constitute an ABC transporter domain. 29 to 36 (GPNGSGKS) serves as a coordination point for ATP.

The protein belongs to the ABC transporter superfamily. Vitamin B12 importer (TC 3.A.1.13.1) family. As to quaternary structure, the complex is composed of two ATP-binding proteins (BtuD), two transmembrane proteins (BtuC) and a solute-binding protein (BtuF).

It is found in the cell inner membrane. It carries out the reaction an R-cob(III)alamin(out) + ATP + H2O = an R-cob(III)alamin(in) + ADP + phosphate + H(+). Part of the ABC transporter complex BtuCDF involved in vitamin B12 import. Responsible for energy coupling to the transport system. This chain is Vitamin B12 import ATP-binding protein BtuD, found in Vibrio vulnificus (strain CMCP6).